A 251-amino-acid chain; its full sequence is Hydroxyacylglutathione hydrolase (251 aa).

His53, His55, Asp57, His58, His110, Asp127, and His165 together coordinate Zn(2+).

The protein belongs to the metallo-beta-lactamase superfamily. Glyoxalase II family. As to quaternary structure, monomer. The cofactor is Zn(2+).

It carries out the reaction an S-(2-hydroxyacyl)glutathione + H2O = a 2-hydroxy carboxylate + glutathione + H(+). It functions in the pathway secondary metabolite metabolism; methylglyoxal degradation; (R)-lactate from methylglyoxal: step 2/2. Its function is as follows. Thiolesterase that catalyzes the hydrolysis of S-D-lactoyl-glutathione to form glutathione and D-lactic acid. In Salmonella typhi, this protein is Hydroxyacylglutathione hydrolase.